A 555-amino-acid polypeptide reads, in one-letter code: CTP synthase (555 aa).

Residues 1–265 form an amidoligase domain region; the sequence is MTRYIFITGG…GNRVCEKLNI (265 aa). Ser-13 is a binding site for CTP. Ser-13 is a UTP binding site. ATP contacts are provided by residues 14 to 19 and Asp-71; that span reads SLGKGI. Mg(2+)-binding residues include Asp-71 and Glu-139. Residues 146–148, 186–191, and Lys-222 each bind CTP; these read DIE and KTKPTQ. Residues 186–191 and Lys-222 each bind UTP; that span reads KTKPTQ. The region spanning 290–541 is the Glutamine amidotransferase type-1 domain; that stretch reads TVAVVGKYVD…IKAGLAAKEA (252 aa). Residue Gly-351 coordinates L-glutamine. Catalysis depends on Cys-378, which acts as the Nucleophile; for glutamine hydrolysis. Residues 379–382, Glu-402, and Arg-469 each bind L-glutamine; that span reads LGMQ. Active-site residues include His-514 and Glu-516.

Belongs to the CTP synthase family. In terms of assembly, homotetramer.

The catalysed reaction is UTP + L-glutamine + ATP + H2O = CTP + L-glutamate + ADP + phosphate + 2 H(+). The enzyme catalyses L-glutamine + H2O = L-glutamate + NH4(+). It catalyses the reaction UTP + NH4(+) + ATP = CTP + ADP + phosphate + 2 H(+). It functions in the pathway pyrimidine metabolism; CTP biosynthesis via de novo pathway; CTP from UDP: step 2/2. Allosterically activated by GTP, when glutamine is the substrate; GTP has no effect on the reaction when ammonia is the substrate. The allosteric effector GTP functions by stabilizing the protein conformation that binds the tetrahedral intermediate(s) formed during glutamine hydrolysis. Inhibited by the product CTP, via allosteric rather than competitive inhibition. In terms of biological role, catalyzes the ATP-dependent amination of UTP to CTP with either L-glutamine or ammonia as the source of nitrogen. Regulates intracellular CTP levels through interactions with the four ribonucleotide triphosphates. The polypeptide is CTP synthase (Coxiella burnetii (strain CbuG_Q212) (Coxiella burnetii (strain Q212))).